The primary structure comprises 626 residues: DNA-directed RNA polymerase subunit gamma (626 aa).

Positions 71, 73, 86, and 89 each coordinate Zn(2+). Residues D467, D469, and D471 each contribute to the Mg(2+) site.

The protein belongs to the RNA polymerase beta' chain family. RpoC1 subfamily. In cyanobacteria the RNAP catalytic core is composed of 2 alpha, 1 beta, 1 beta', 1 gamma and 1 omega subunit. When a sigma factor is associated with the core the holoenzyme is formed, which can initiate transcription. Requires Mg(2+) as cofactor. Zn(2+) is required as a cofactor.

It catalyses the reaction RNA(n) + a ribonucleoside 5'-triphosphate = RNA(n+1) + diphosphate. In terms of biological role, DNA-dependent RNA polymerase catalyzes the transcription of DNA into RNA using the four ribonucleoside triphosphates as substrates. The protein is DNA-directed RNA polymerase subunit gamma of Microcystis aeruginosa (strain NIES-843 / IAM M-2473).